The chain runs to 105 residues: Large ribosomal subunit protein uL24 (105 aa).

Belongs to the universal ribosomal protein uL24 family. In terms of assembly, part of the 50S ribosomal subunit.

Functionally, one of two assembly initiator proteins, it binds directly to the 5'-end of the 23S rRNA, where it nucleates assembly of the 50S subunit. One of the proteins that surrounds the polypeptide exit tunnel on the outside of the subunit. This is Large ribosomal subunit protein uL24 from Francisella tularensis subsp. tularensis (strain FSC 198).